The sequence spans 354 residues: UDP-N-acetylglucosamine--N-acetylmuramyl-(pentapeptide) pyrophosphoryl-undecaprenol N-acetylglucosamine transferase (354 aa).

UDP-N-acetyl-alpha-D-glucosamine contacts are provided by residues 15 to 17 (TGG), Asn127, Arg163, Ser191, Ile244, 263 to 268 (ALTVSE), and Gln288.

The protein belongs to the glycosyltransferase 28 family. MurG subfamily.

The protein resides in the cell inner membrane. The enzyme catalyses di-trans,octa-cis-undecaprenyl diphospho-N-acetyl-alpha-D-muramoyl-L-alanyl-D-glutamyl-meso-2,6-diaminopimeloyl-D-alanyl-D-alanine + UDP-N-acetyl-alpha-D-glucosamine = di-trans,octa-cis-undecaprenyl diphospho-[N-acetyl-alpha-D-glucosaminyl-(1-&gt;4)]-N-acetyl-alpha-D-muramoyl-L-alanyl-D-glutamyl-meso-2,6-diaminopimeloyl-D-alanyl-D-alanine + UDP + H(+). It functions in the pathway cell wall biogenesis; peptidoglycan biosynthesis. Functionally, cell wall formation. Catalyzes the transfer of a GlcNAc subunit on undecaprenyl-pyrophosphoryl-MurNAc-pentapeptide (lipid intermediate I) to form undecaprenyl-pyrophosphoryl-MurNAc-(pentapeptide)GlcNAc (lipid intermediate II). In Serratia proteamaculans (strain 568), this protein is UDP-N-acetylglucosamine--N-acetylmuramyl-(pentapeptide) pyrophosphoryl-undecaprenol N-acetylglucosamine transferase.